Reading from the N-terminus, the 427-residue chain is Enolase (427 aa).

Gln162 serves as a coordination point for (2R)-2-phosphoglycerate. The Proton donor role is filled by Glu204. Mg(2+) contacts are provided by Asp241, Glu283, and Asp310. (2R)-2-phosphoglycerate is bound by residues Lys335, Arg364, Ser365, and Lys386. Lys335 functions as the Proton acceptor in the catalytic mechanism.

The protein belongs to the enolase family. The cofactor is Mg(2+).

It localises to the cytoplasm. The protein resides in the secreted. It is found in the cell surface. The catalysed reaction is (2R)-2-phosphoglycerate = phosphoenolpyruvate + H2O. It participates in carbohydrate degradation; glycolysis; pyruvate from D-glyceraldehyde 3-phosphate: step 4/5. In terms of biological role, catalyzes the reversible conversion of 2-phosphoglycerate (2-PG) into phosphoenolpyruvate (PEP). It is essential for the degradation of carbohydrates via glycolysis. The protein is Enolase of Mycolicibacterium smegmatis (strain ATCC 700084 / mc(2)155) (Mycobacterium smegmatis).